Consider the following 101-residue polypeptide: Small ribosomal subunit protein bS16 (101 aa).

It belongs to the bacterial ribosomal protein bS16 family.

This Ureaplasma parvum serovar 3 (strain ATCC 700970) protein is Small ribosomal subunit protein bS16.